Reading from the N-terminus, the 522-residue chain is Lysine--tRNA ligase (522 aa).

The 'HIGH' region motif lies at 44–52 (PSGLPHIGT). Positions 290 to 294 (KISKS) match the 'KMSKS' region motif. Lysine 293 provides a ligand contact to ATP.

This sequence belongs to the class-I aminoacyl-tRNA synthetase family.

The protein resides in the cytoplasm. It carries out the reaction tRNA(Lys) + L-lysine + ATP = L-lysyl-tRNA(Lys) + AMP + diphosphate. This chain is Lysine--tRNA ligase, found in Rickettsia bellii (strain OSU 85-389).